Consider the following 61-residue polypeptide: Small ribosomal subunit protein uS14 (61 aa).

4 residues coordinate Zn(2+): Cys-24, Cys-27, Cys-40, and Cys-43.

This sequence belongs to the universal ribosomal protein uS14 family. Zinc-binding uS14 subfamily. In terms of assembly, part of the 30S ribosomal subunit. Contacts proteins S3 and S10. Zn(2+) serves as cofactor.

Its function is as follows. Binds 16S rRNA, required for the assembly of 30S particles and may also be responsible for determining the conformation of the 16S rRNA at the A site. The chain is Small ribosomal subunit protein uS14 from Dictyoglomus turgidum (strain DSM 6724 / Z-1310).